Here is a 231-residue protein sequence, read N- to C-terminus: Ribose-5-phosphate isomerase A (231 aa).

Residues 31-34 (TGST), 86-89 (DGAD), and 100-103 (KGLG) contribute to the substrate site. The Proton acceptor role is filled by Glu-109. Lys-127 lines the substrate pocket.

Belongs to the ribose 5-phosphate isomerase family. Homodimer.

It catalyses the reaction aldehydo-D-ribose 5-phosphate = D-ribulose 5-phosphate. Its pathway is carbohydrate degradation; pentose phosphate pathway; D-ribose 5-phosphate from D-ribulose 5-phosphate (non-oxidative stage): step 1/1. In terms of biological role, catalyzes the reversible conversion of ribose-5-phosphate to ribulose 5-phosphate. This Gluconobacter oxydans (strain 621H) (Gluconobacter suboxydans) protein is Ribose-5-phosphate isomerase A.